A 467-amino-acid chain; its full sequence is Gamma-aminobutyric acid receptor subunit gamma-3 (467 aa).

Residues 1–17 (MAAKLLLLLCLFSGLHA) form the signal peptide. The Extracellular segment spans residues 18-256 (RSRRVEEDDS…FELSRRMGYF (239 aa)). N-linked (GlcNAc...) asparagine glycosylation is present at N110. Cysteines 171 and 185 form a disulfide. N228 carries N-linked (GlcNAc...) asparagine glycosylation. A helical transmembrane segment spans residues 257–277 (TIQTYIPCILTVVLSWVSFWI). Residues 278-283 (KKDATP) are Cytoplasmic-facing. A helical membrane pass occupies residues 284–303 (ARTTLGITTVLTMTTLSTIA). The Extracellular portion of the chain corresponds to 304-311 (RKSLPRVS). The chain crosses the membrane as a helical span at residues 312 to 332 (YVTAMDLFVTVCFLFVFAALM). The Cytoplasmic portion of the chain corresponds to 333-446 (EYATLNYYSS…DVSELDSYSR (114 aa)). Residues 447 to 467 (VFFPTSFLLFNLVYWVGYLYL) traverse the membrane as a helical segment.

This sequence belongs to the ligand-gated ion channel (TC 1.A.9) family. Gamma-aminobutyric acid receptor (TC 1.A.9.5) subfamily. GABRG3 sub-subfamily. Heteropentamer, formed by a combination of alpha (GABRA1-6), beta (GABRB1-3), gamma (GABRG1-3), delta (GABRD), epsilon (GABRE), rho (GABRR1-3), pi (GABRP) and theta (GABRQ) chains, each subunit exhibiting distinct physiological and pharmacological properties. Post-translationally, may be palmitoylated. Expressed in brain.

Its subcellular location is the postsynaptic cell membrane. It localises to the cell membrane. It catalyses the reaction chloride(in) = chloride(out). Its activity is regulated as follows. Allosterically potentiated by alphaxalone. Allosterically inhibited by pregnenolone sulfate. Inhibited by zinc and lanthanum. Functionally, gamma subunit of the heteropentameric ligand-gated chloride channel gated by gamma-aminobutyric acid (GABA), a major inhibitory neurotransmitter in the brain. GABA-gated chloride channels, also named GABA(A) receptors (GABAAR), consist of five subunits arranged around a central pore and contain GABA active binding site(s) located at the alpha and beta subunit interface(s). When activated by GABA, GABAARs selectively allow the flow of chloride across the cell membrane down their electrochemical gradient. The protein is Gamma-aminobutyric acid receptor subunit gamma-3 of Rattus norvegicus (Rat).